The chain runs to 1127 residues: MAECGRGGAAGGALPTSPGPALGAKGALKAGVGEGGGGGGRLGHGRARYDSGGVSNGDCSLGVSGDEARASPTRGPRGVALAPTPSAVVCTLPRESKPGGLPRRSSIIKDGTKQKRERKKTVSFSSMPTEKKISSASDCINSMVEGSELKKVRSNSRIYHRYFLLDADMQSLRWEPSKKDSEKAKIDIKSIKEVRTGKNTDIFRSNGISDQISEDCAFSVIYGENYESLDLVANSADVANIWVTGLRYLISYGKHTLDMLESSQDNMRTSWVSQMFSEIDVDNLGHITLCNAVQCIRNLNPGLKTSKIELKFKELHKSKDKAGTEVTKEEFIEVFHELCTRPEIYFLLVQFSSNKEFLDTKDLMMFLEAEQGVAHINEEISLEIIHKYEPSKEGQEKGWLSIDGFTNYLMSPDCYIFDPEHKKVCQDMKQPLSHYFINSSHNTYLIEDQFRGPSDITGYIRALKMGCRSVELDVWDGPDNEPVIYTGHTMTSQIVFRSVIDIINKYAFFASEYPLILCLENHCSIKQQKVMVQHMKKLLGDKLYTTSPNVEESYLPSPDVLKGKILIKAKKLSSNCSGVEGDVTDEDEGAEMSQRMGKENMEQPNNVPVKRFQLCKELSELVSICKSVQFKEFQVSFQVQKYWEVCSFNEVLASKYANENPGDFVNYNKRFLARVFPSPMRIDSSNMNPQDFWKCGCQIVAMNFQTPGLMMDLNIGWFRQNGNCGYVLRPAIMREEVSFFSANTKDSVPGVSPQLLHIKIISGQNFPKPKGSGAKGDVVDPYVYVEIHGIPADCAEQRTKTVHQNGDAPIFDESFEFQINLPELAMVRFVVLDDDYIGDEFIGQYTIPFECLQTGYRHVPLQSLTGEVLAHASLFVHVAITNRRGGGKPHKRGLSVRKGKKSREYASLRTLWIKTVDEVFKNAQPPIRDATDLRENMQNAVVSFKELCGLSSVANLMQCMLAVSPRFLGPDNTPLVVLNLSEQYPTMELQGIVPEVLKKIVTTYDMMIQSLKALIENADAVYEKIVHCQKAAMEFHEHLHSIGTKEGLKERKLQKAVESFTWNITILKGQADLLKYAKNETLENLKQIHFAAVSCGLNKPGTENADVQKPRRSLEVIPEKANDETGE.

Gly residues predominate over residues 1–11; that stretch reads MAECGRGGAAG. A disordered region spans residues 1-128; the sequence is MAECGRGGAA…KKTVSFSSMP (128 aa). Alanine 2 is subject to N-acetylalanine. Serine 17 is subject to Phosphoserine. Positions 19 to 31 are enriched in low complexity; that stretch reads GPALGAKGALKAG. Over residues 32–42 the composition is skewed to gly residues; sequence VGEGGGGGGRL. A Phosphothreonine modification is found at threonine 84. The PH domain maps to 141–251; sequence NSMVEGSELK…WVTGLRYLIS (111 aa). One can recognise a PI-PLC X-box domain in the interval 426–570; the sequence is QDMKQPLSHY…LKGKILIKAK (145 aa). Phosphothreonine is present on threonine 584. The PI-PLC Y-box domain maps to 618 to 734; that stretch reads LSELVSICKS…GYVLRPAIMR (117 aa). One can recognise a C2 domain in the interval 734 to 863; sequence REEVSFFSAN…TGYRHVPLQS (130 aa). Positions 1101–1127 are disordered; that stretch reads GTENADVQKPRRSLEVIPEKANDETGE. Positions 1106-1127 are enriched in basic and acidic residues; it reads DVQKPRRSLEVIPEKANDETGE. A Phosphoserine modification is found at serine 1113.

Its subcellular location is the cytoplasm. May play an role in the regulation of Ins(1,4,5)P3 around the endoplasmic reticulum. The polypeptide is Inactive phospholipase C-like protein 2 (PLCL2) (Homo sapiens (Human)).